The chain runs to 245 residues: MASLGVNIDHIANVRQARQTVEPDPVPMALLAELGGADGITVHLREDRRHIQDRDLELLRATVRSRLNLEMAATPEMVGIALKIQPDMVTLVPERRQEVTTEGGLDVAAQQGSLKGMVDQLQVAGIPVSLFVDPVSQQLEAACKSGARWVELHTGAYAEACWANQSFELARLNEATARARSLGLRVNAGHGLTYQNVEAVAAIEGIEELNIGHTIVARSIAVGLQEAVREMKRLVQNPRREPLFG.

Residue N7 participates in 3-amino-2-oxopropyl phosphate binding. 9 to 10 (DH) serves as a coordination point for 1-deoxy-D-xylulose 5-phosphate. R18 contributes to the 3-amino-2-oxopropyl phosphate binding site. H43 acts as the Proton acceptor in catalysis. 1-deoxy-D-xylulose 5-phosphate is bound by residues R45 and H50. The Proton acceptor role is filled by E70. T100 lines the 1-deoxy-D-xylulose 5-phosphate pocket. The Proton donor role is filled by H190. Residues G191 and 212-213 (GH) contribute to the 3-amino-2-oxopropyl phosphate site.

Belongs to the PNP synthase family. Homooctamer; tetramer of dimers.

The protein resides in the cytoplasm. It catalyses the reaction 3-amino-2-oxopropyl phosphate + 1-deoxy-D-xylulose 5-phosphate = pyridoxine 5'-phosphate + phosphate + 2 H2O + H(+). Its pathway is cofactor biosynthesis; pyridoxine 5'-phosphate biosynthesis; pyridoxine 5'-phosphate from D-erythrose 4-phosphate: step 5/5. Catalyzes the complicated ring closure reaction between the two acyclic compounds 1-deoxy-D-xylulose-5-phosphate (DXP) and 3-amino-2-oxopropyl phosphate (1-amino-acetone-3-phosphate or AAP) to form pyridoxine 5'-phosphate (PNP) and inorganic phosphate. The protein is Pyridoxine 5'-phosphate synthase of Prochlorococcus marinus (strain MIT 9303).